A 125-amino-acid chain; its full sequence is Small ribosomal subunit protein bS6 (125 aa).

The interval 94–125 (KAETGASSMMKTVEREEARKASQAEFAASNER) is disordered. A compositionally biased stretch (basic and acidic residues) spans 105-115 (TVEREEARKAS).

The protein belongs to the bacterial ribosomal protein bS6 family.

Binds together with bS18 to 16S ribosomal RNA. This is Small ribosomal subunit protein bS6 from Acidovorax ebreus (strain TPSY) (Diaphorobacter sp. (strain TPSY)).